Reading from the N-terminus, the 267-residue chain is Mediator of RNA polymerase II transcription subunit 8 (267 aa).

2 coiled-coil regions span residues 2–27 and 118–163; these read QQRE…KGSL and VEEQ…EDRD. Residues 156–165 are compositionally biased toward basic and acidic residues; the sequence is NNPREDRDSE. Disordered stretches follow at residues 156 to 180 and 227 to 267; these read NNPR…NPAD and ASGH…PYNR. Residues 166 to 180 show a composition bias toward polar residues; it reads TSALRQNKPSFNPAD. The segment covering 236-247 has biased composition (low complexity); it reads GPVAPQQPGQPG.

It belongs to the Mediator complex subunit 8 family. As to quaternary structure, component of the Mediator complex. May be part of a multisubunit E3 ubiquitin-protein ligase complex.

Its subcellular location is the nucleus. The protein operates within protein modification; protein ubiquitination. Functionally, component of the Mediator complex, a coactivator involved in the regulated transcription of nearly all RNA polymerase II-dependent genes. Mediator functions as a bridge to convey information from gene-specific regulatory proteins to the basal RNA polymerase II transcription machinery. Mediator is recruited to promoters by direct interactions with regulatory proteins and serves as a scaffold for the assembly of a functional preinitiation complex with RNA polymerase II and the general transcription factors. May play a role as a target recruitment subunit in E3 ubiquitin-protein ligase complexes and thus in ubiquitination and subsequent proteasomal degradation of target proteins. The chain is Mediator of RNA polymerase II transcription subunit 8 (med8) from Danio rerio (Zebrafish).